A 75-amino-acid chain; its full sequence is uncharacterized protein (75 aa).

Residues 43–67 (CSECGLPIPTTRLRANPFAHRCVSC) form a dksA C4-type zinc finger.

This is an uncharacterized protein from Haemophilus influenzae (strain ATCC 51907 / DSM 11121 / KW20 / Rd).